A 320-amino-acid polypeptide reads, in one-letter code: Olfactory receptor 52W1 (320 aa).

Over Met-1–Thr-30 the chain is Extracellular. The N-linked (GlcNAc...) asparagine glycan is linked to Asn-8. A helical membrane pass occupies residues Trp-31 to Pro-51. Over Ala-52 to Thr-59 the chain is Cytoplasmic. Residues Leu-60 to Thr-80 traverse the membrane as a helical segment. The Extracellular segment spans residues Ser-81–Val-104. Residues Gln-105–Cys-125 form a helical membrane-spanning segment. Residues Asp-126 to Ala-144 lie on the Cytoplasmic side of the membrane. Residues Cys-145–Pro-165 form a helical membrane-spanning segment. Topologically, residues Leu-166–Asn-201 are extracellular. A helical transmembrane segment spans residues Leu-202–Ser-222. At Tyr-223 to Ala-242 the chain is on the cytoplasmic side. The chain crosses the membrane as a helical span at residues Phe-243–Ser-263. Residues Tyr-264–His-279 lie on the Extracellular side of the membrane. Residues Ile-280–Ala-300 form a helical membrane-spanning segment. The Cytoplasmic segment spans residues Arg-301–Leu-320.

The protein belongs to the G-protein coupled receptor 1 family.

The protein localises to the cell membrane. Functionally, odorant receptor. The polypeptide is Olfactory receptor 52W1 (OR52W1) (Homo sapiens (Human)).